A 316-amino-acid polypeptide reads, in one-letter code: tRNA dimethylallyltransferase (316 aa).

17–24 is an ATP binding site; the sequence is GPTASGKT. Residue 19–24 participates in substrate binding; it reads TASGKT. Interaction with substrate tRNA regions lie at residues 42–45, 166–170, and 247–252; these read DSAL, QRLSR, and RCVGYR.

This sequence belongs to the IPP transferase family. As to quaternary structure, monomer. Mg(2+) is required as a cofactor.

It carries out the reaction adenosine(37) in tRNA + dimethylallyl diphosphate = N(6)-dimethylallyladenosine(37) in tRNA + diphosphate. Its function is as follows. Catalyzes the transfer of a dimethylallyl group onto the adenine at position 37 in tRNAs that read codons beginning with uridine, leading to the formation of N6-(dimethylallyl)adenosine (i(6)A). This chain is tRNA dimethylallyltransferase, found in Salmonella enteritidis PT4 (strain P125109).